We begin with the raw amino-acid sequence, 141 residues long: Hemoglobin subunit alpha-1 (141 aa).

One can recognise a Globin domain in the interval 1–141; the sequence is VLSPEDKNNV…VSTVLTSKYR (141 aa). O2 is bound at residue H58. H87 contributes to the heme b binding site.

It belongs to the globin family. As to quaternary structure, heterotetramer of two alpha chains and two beta chains. Red blood cells.

Functionally, involved in oxygen transport from the lung to the various peripheral tissues. The chain is Hemoglobin subunit alpha-1 from Tadarida brasiliensis (Brazilian free-tailed bat).